The primary structure comprises 37 residues: Potassium channel toxin alpha-KTx 2.19 (37 aa).

3 cysteine pairs are disulfide-bonded: cysteine 7–cysteine 28, cysteine 13–cysteine 33, and cysteine 17–cysteine 35.

As to expression, expressed by the venom gland.

It localises to the secreted. In terms of biological role, inhibitor of voltage-gated potassium channels. This Rhopalurus junceus (Caribbean blue scorpion) protein is Potassium channel toxin alpha-KTx 2.19.